The following is a 339-amino-acid chain: Ketol-acid reductoisomerase (NADP(+)) (339 aa).

Positions 1-182 constitute a KARI N-terminal Rossmann domain; that stretch reads MRVYYDRDAD…GGGRSGVIET (182 aa). NADP(+) is bound by residues 24 to 27, Arg48, Ser51, Thr53, and 83 to 86; these read YGSQ and DEHQ. Residue His108 is part of the active site. Position 134 (Gly134) interacts with NADP(+). The region spanning 183–328 is the KARI C-terminal knotted domain; sequence TFKEECETDL…AELRAMMPWI (146 aa). The Mg(2+) site is built by Asp191, Glu195, Glu227, and Glu231. Ser252 contributes to the substrate binding site.

This sequence belongs to the ketol-acid reductoisomerase family. It depends on Mg(2+) as a cofactor.

It catalyses the reaction (2R)-2,3-dihydroxy-3-methylbutanoate + NADP(+) = (2S)-2-acetolactate + NADPH + H(+). It carries out the reaction (2R,3R)-2,3-dihydroxy-3-methylpentanoate + NADP(+) = (S)-2-ethyl-2-hydroxy-3-oxobutanoate + NADPH + H(+). The protein operates within amino-acid biosynthesis; L-isoleucine biosynthesis; L-isoleucine from 2-oxobutanoate: step 2/4. It participates in amino-acid biosynthesis; L-valine biosynthesis; L-valine from pyruvate: step 2/4. Functionally, involved in the biosynthesis of branched-chain amino acids (BCAA). Catalyzes an alkyl-migration followed by a ketol-acid reduction of (S)-2-acetolactate (S2AL) to yield (R)-2,3-dihydroxy-isovalerate. In the isomerase reaction, S2AL is rearranged via a Mg-dependent methyl migration to produce 3-hydroxy-3-methyl-2-ketobutyrate (HMKB). In the reductase reaction, this 2-ketoacid undergoes a metal-dependent reduction by NADPH to yield (R)-2,3-dihydroxy-isovalerate. The sequence is that of Ketol-acid reductoisomerase (NADP(+)) from Rhizorhabdus wittichii (strain DSM 6014 / CCUG 31198 / JCM 15750 / NBRC 105917 / EY 4224 / RW1) (Sphingomonas wittichii).